Consider the following 710-residue polypeptide: Phosphoribosylformylglycinamidine synthase subunit PurL (710 aa).

Histidine 36 is a catalytic residue. ATP-binding residues include tyrosine 39 and lysine 80. Glutamate 82 lines the Mg(2+) pocket. Substrate contacts are provided by residues 83-86 (SHNH) and arginine 105. The active-site Proton acceptor is the histidine 84. Aspartate 106 contributes to the Mg(2+) binding site. Glutamine 226 lines the substrate pocket. Aspartate 252 is a binding site for Mg(2+). 294–296 (ETQ) contributes to the substrate binding site. ATP-binding residues include aspartate 470 and glycine 507. Position 510 (serine 510) interacts with substrate.

It belongs to the FGAMS family. In terms of assembly, monomer. Part of the FGAM synthase complex composed of 1 PurL, 1 PurQ and 2 PurS subunits.

The protein localises to the cytoplasm. It carries out the reaction N(2)-formyl-N(1)-(5-phospho-beta-D-ribosyl)glycinamide + L-glutamine + ATP + H2O = 2-formamido-N(1)-(5-O-phospho-beta-D-ribosyl)acetamidine + L-glutamate + ADP + phosphate + H(+). It functions in the pathway purine metabolism; IMP biosynthesis via de novo pathway; 5-amino-1-(5-phospho-D-ribosyl)imidazole from N(2)-formyl-N(1)-(5-phospho-D-ribosyl)glycinamide: step 1/2. Functionally, part of the phosphoribosylformylglycinamidine synthase complex involved in the purines biosynthetic pathway. Catalyzes the ATP-dependent conversion of formylglycinamide ribonucleotide (FGAR) and glutamine to yield formylglycinamidine ribonucleotide (FGAM) and glutamate. The FGAM synthase complex is composed of three subunits. PurQ produces an ammonia molecule by converting glutamine to glutamate. PurL transfers the ammonia molecule to FGAR to form FGAM in an ATP-dependent manner. PurS interacts with PurQ and PurL and is thought to assist in the transfer of the ammonia molecule from PurQ to PurL. This Sulfolobus acidocaldarius (strain ATCC 33909 / DSM 639 / JCM 8929 / NBRC 15157 / NCIMB 11770) protein is Phosphoribosylformylglycinamidine synthase subunit PurL.